Consider the following 476-residue polypeptide: Cardiolipin synthase (476 aa).

Helical transmembrane passes span 2-22 (HLFINMIFLINIVFIISIIFI) and 31-51 (WAWILILTFLPILGFIIYILF). PLD phosphodiesterase domains lie at 207 to 234 (INYRNHRKILIIDSKVAFLGGFNIGDEY) and 389 to 416 (EKGFLHAKTIVADSSICSVGTANMDIRS). Catalysis depends on residues His-212, Lys-214, Asp-219, His-394, Lys-396, and Asp-401.

The protein belongs to the phospholipase D family. Cardiolipin synthase subfamily.

It localises to the cell membrane. The enzyme catalyses 2 a 1,2-diacyl-sn-glycero-3-phospho-(1'-sn-glycerol) = a cardiolipin + glycerol. Catalyzes the reversible phosphatidyl group transfer from one phosphatidylglycerol molecule to another to form cardiolipin (CL) (diphosphatidylglycerol) and glycerol. The chain is Cardiolipin synthase (cls) from Clostridium perfringens (strain ATCC 13124 / DSM 756 / JCM 1290 / NCIMB 6125 / NCTC 8237 / Type A).